Reading from the N-terminus, the 5911-residue chain is Nonribosomal peptide synthetase 30 (5911 aa).

The tract at residues 1 to 22 (MVPEKPTAQSKSGIGEPFRAGD) is disordered. Positions 352–754 (ALIQPSSTAV…GRKDAQVKIR (403 aa)) are adenylation 1. The Carrier 1 domain occupies 891 to 968 (PRPFSVEYSL…EAAAIVARGT (78 aa)). Serine 928 bears the O-(pantetheine 4'-phosphoryl)serine mark. The condensation 1 stretch occupies residues 1007 to 1422 (EDAFPCTPLQ…ERLIFVIDQL (416 aa)). Residues 1467-1865 (ERALSQPDRP…SLMFVGRKAD (399 aa)) form an adenylation 2 region. Residues 2001-2077 (QPTSELEAEM…NICSHSYYCS (77 aa)) enclose the Carrier 2 domain. Serine 2038 carries the O-(pantetheine 4'-phosphoryl)serine modification. The interval 2121 to 2538 (QDAYPCTPLQ…GPDINMSDIG (418 aa)) is condensation 2. The interval 2568 to 2977 (EEQARLRPEA…GRKDSQVKIR (410 aa)) is adenylation 3. One can recognise a Carrier 3 domain in the interval 3110–3186 (QPSTNAQREL…LIADNSKSIK (77 aa)). At serine 3147 the chain carries O-(pantetheine 4'-phosphoryl)serine. A condensation 3 region spans residues 3227-3652 (VQDAYPCTPL…LELVIQAFMA (426 aa)). Residues 3701 to 4108 (EERVREQPNA…GRKDSQVKIR (408 aa)) are adenylation 4. The region spanning 4248–4325 (PPTTPLECQM…DIIATMTKNK (78 aa)) is the Carrier 4 domain. The residue at position 4285 (serine 4285) is an O-(pantetheine 4'-phosphoryl)serine. The interval 4326-4347 (ATGASRRLPRDDDEPIPHTKYA) is disordered. The interval 4353–4793 (SYAQGRLWFL…SLPLLTEDGR (441 aa)) is condensation 4. The interval 4819–5231 (FKEQVSRHPN…GRMDVQVKIR (413 aa)) is adenylation 5. The Carrier 5 domain occupies 5360–5436 (KPTTDMEVAL…ALARRQEEIV (77 aa)). Serine 5397 is modified (O-(pantetheine 4'-phosphoryl)serine). Residues 5474 to 5828 (VEDMLPLTSM…GIKMKLHFFT (355 aa)) are condensation 5.

It belongs to the NRP synthetase family.

It participates in secondary metabolite biosynthesis. Its function is as follows. Nonribosomal peptide synthetase; part of the gene cluster that mediates the biosynthesis of sansalvamide, a cyclic pentadepsipeptide that shows promising results as potential anti-cancer drug. The nonribosmal peptide synthetase NRPS30 produces sansalvamide by incorporating successively one phenylalanine, one leucine, one alpha-hydroxyisocaproic acid (HICA), one valine and one leucine before sansalvamide is released from by cyclization by the terminal C domain of NRPS30. The HICA residue is probably provided by reduction of alpha-ketoisocaproate by the cluster-specific aldo-keto reductase (NECHADRAFT_45914). In Fusarium vanettenii (strain ATCC MYA-4622 / CBS 123669 / FGSC 9596 / NRRL 45880 / 77-13-4) (Fusarium solani subsp. pisi), this protein is Nonribosomal peptide synthetase 30.